The following is a 439-amino-acid chain: High-energy light unresponsive protein 1 (439 aa).

The Cytoplasmic portion of the chain corresponds to 1–67 (MPPPSSHSNI…LGLNQSIRPN (67 aa)). The chain crosses the membrane as a helical span at residues 68–88 (NSLLFRIYSWLVFCLLLFTTL). Residues 89–114 (RKFNQVGVRPNGTRENLQEFFANPRS) are Extracellular-facing. A helical transmembrane segment spans residues 115 to 135 (MITLCNALIMLSGLLASLQLY). Topologically, residues 136-164 (TLGAKRLKPLKILCQFSLNVRTKQAERRQ) are cytoplasmic. The chain crosses the membrane as a helical span at residues 165–185 (FMINTFLAVFSGLLALTMAAT). Residues 186–211 (YAMSKWGYILYIVGTPNLDTETIFCV) are Extracellular-facing. Residues 212–232 (LLDSYALFVSRAAISALAILF) traverse the membrane as a helical segment. The Cytoplasmic segment spans residues 233 to 290 (YQHCSVIRRSIKHLINEMVPAEQDECPLPESSLQKIHDCQISYQRIFNGKAVIEEYYS). Residues 291–311 (FVLFYSYGVCIPIFCFLMFVG) form a helical membrane-spanning segment. The Extracellular portion of the chain corresponds to 312–324 (MSAQSICWSEVVS). Residues 325-345 (IVIWIVNAILVLLLFSLPAFM) traverse the membrane as a helical segment. At 346 to 402 (INEDGDRLVASSFRMYHETFHEERDLTVLSQMTFFTFQIHSTKLTLSACNYFYMDRS) the chain is on the cytoplasmic side. Residues 403-423 (ILLSLFSAILTYFLILWEFDI) traverse the membrane as a helical segment. Over 424-439 (KNNQSLQNIANHTIHT) the chain is Extracellular.

This sequence belongs to the insect chemoreceptor superfamily. Gustatory receptor (GR) family. In terms of tissue distribution, expressed in the AVG and PVT neurons of the tail.

It is found in the cell membrane. Its function is as follows. Photoreceptor for short wavelength (UV) light that mediates UV-light-induced avoidance behavior. Directly senses and absorbs both UV-A and UV-B light with very high efficiency. Absorption of UV-B but not UV-A light shows resistance to photobleaching. In contrast to other photoreceptors, does not use a prosthetic chromophore to capture photons and only depends on its protein conformation. Might have a role in response to white light exposure. This Caenorhabditis elegans protein is High-energy light unresponsive protein 1.